A 535-amino-acid polypeptide reads, in one-letter code: Beta-glucosidase 47 (535 aa).

Positions 1 to 38 (MKKSIVYEIMETKSSMYLSQFRLWLCFIITTLVSLSSS) are cleaved as a signal peptide. Glutamine 73 lines the a beta-D-glucoside pocket. Asparagine 93 carries N-linked (GlcNAc...) asparagine glycosylation. A beta-D-glucoside is bound by residues histidine 175 and 220–221 (NE). The active-site Proton donor is the glutamate 221. Cysteine 240 and cysteine 247 form a disulfide bridge. An N-linked (GlcNAc...) asparagine glycan is attached at asparagine 246. Position 363 (tyrosine 363) interacts with a beta-D-glucoside. A disulfide bridge connects residues cysteine 371 and cysteine 376. The N-linked (GlcNAc...) asparagine glycan is linked to asparagine 419. An a beta-D-glucoside-binding site is contributed by glutamate 426. The Nucleophile role is filled by glutamate 426. Asparagine 432 carries an N-linked (GlcNAc...) asparagine glycan. A beta-D-glucoside-binding positions include tryptophan 470, 477-478 (EW), and phenylalanine 486.

Belongs to the glycosyl hydrolase 1 family.

It catalyses the reaction Hydrolysis of terminal, non-reducing beta-D-glucosyl residues with release of beta-D-glucose.. The protein is Beta-glucosidase 47 of Arabidopsis thaliana (Mouse-ear cress).